The sequence spans 477 residues: MSADKAVFTRRIMGIETEFGITCTHDGAQAVAPDDIARQLFRPIVDRFRSSNIYTLNGGRLYLDVGSHPEYATPECDSLNQLLIYDRAGEVTLNRLADQAEHALADQHIEGTVHLMKNNTDSLGNSYGCHENYLVGRAILLKKLGQEFIPFLITRQLICGAGHIARPHSRFSDGDTTPVYQLSQRADHVWEGVSSATTRSRPIINTRDEPHADSEMYRRLHVIVGDSSMSETTAALKIGSALLVLEMLEAGCSFDEWEIANPSKTIRDISRDLTGRAEVPLRSGRISCALEIQQAFAEKAQQWLDERPEEQHGTPNADMQRVVDLWKKVLAAIDSGDTSSIEADIDWVIKKNIIDRYQDKFGWDLTHPKLQQIDYAYHDIRPGKGIFRTLEERGRVSRWLDGADSSITDAADTPPQTTRAKMRGDFLRVAQENDADVSVDWTRLKINRPEPHDIALLDPFAAHDSRADDMISSILDR.

Residue Glu16 coordinates Mg(2+). Arg60 serves as a coordination point for ATP. Tyr62 contributes to the Mg(2+) binding site. Asp64 functions as the Proton acceptor in the catalytic mechanism. Glu70 contacts Mg(2+). ATP contacts are provided by Thr73 and Trp441.

This sequence belongs to the Pup ligase/Pup deamidase family. Pup-conjugating enzyme subfamily.

It catalyses the reaction ATP + [prokaryotic ubiquitin-like protein]-L-glutamate + [protein]-L-lysine = ADP + phosphate + N(6)-([prokaryotic ubiquitin-like protein]-gamma-L-glutamyl)-[protein]-L-lysine.. It functions in the pathway protein degradation; proteasomal Pup-dependent pathway. It participates in protein modification; protein pupylation. Catalyzes the covalent attachment of the prokaryotic ubiquitin-like protein modifier Pup to the proteasomal substrate proteins, thereby targeting them for proteasomal degradation. This tagging system is termed pupylation. The ligation reaction involves the side-chain carboxylate of the C-terminal glutamate of Pup and the side-chain amino group of a substrate lysine. This Corynebacterium kroppenstedtii (strain DSM 44385 / JCM 11950 / CIP 105744 / CCUG 35717) protein is Pup--protein ligase.